The chain runs to 343 residues: Anthranilate phosphoribosyltransferase (343 aa).

Residues Gly86, Gly89–Asp90, Thr94, Asn96–Thr99, Lys114–Gly122, and Ser126 contribute to the 5-phospho-alpha-D-ribose 1-diphosphate site. Gly86 is a binding site for anthranilate. Ser98 serves as a coordination point for Mg(2+). Anthranilate is bound at residue Asn117. Arg172 is an anthranilate binding site. 2 residues coordinate Mg(2+): Asp231 and Glu232.

It belongs to the anthranilate phosphoribosyltransferase family. Homodimer. Mg(2+) is required as a cofactor.

It catalyses the reaction N-(5-phospho-beta-D-ribosyl)anthranilate + diphosphate = 5-phospho-alpha-D-ribose 1-diphosphate + anthranilate. The protein operates within amino-acid biosynthesis; L-tryptophan biosynthesis; L-tryptophan from chorismate: step 2/5. Catalyzes the transfer of the phosphoribosyl group of 5-phosphorylribose-1-pyrophosphate (PRPP) to anthranilate to yield N-(5'-phosphoribosyl)-anthranilate (PRA). The protein is Anthranilate phosphoribosyltransferase of Prochlorococcus marinus subsp. pastoris (strain CCMP1986 / NIES-2087 / MED4).